The chain runs to 199 residues: Pyridoxal 5'-phosphate synthase subunit PdxT (199 aa).

Residue 47 to 49 (GES) coordinates L-glutamine. The active-site Nucleophile is Cys-79. Residues Arg-106 and 133 to 134 (IR) contribute to the L-glutamine site. Catalysis depends on charge relay system residues His-169 and Glu-171.

The protein belongs to the glutaminase PdxT/SNO family. In terms of assembly, in the presence of PdxS, forms a dodecamer of heterodimers. Only shows activity in the heterodimer.

The enzyme catalyses aldehydo-D-ribose 5-phosphate + D-glyceraldehyde 3-phosphate + L-glutamine = pyridoxal 5'-phosphate + L-glutamate + phosphate + 3 H2O + H(+). It catalyses the reaction L-glutamine + H2O = L-glutamate + NH4(+). It participates in cofactor biosynthesis; pyridoxal 5'-phosphate biosynthesis. Its function is as follows. Catalyzes the hydrolysis of glutamine to glutamate and ammonia as part of the biosynthesis of pyridoxal 5'-phosphate. The resulting ammonia molecule is channeled to the active site of PdxS. This chain is Pyridoxal 5'-phosphate synthase subunit PdxT, found in Desulfitobacterium hafniense (strain Y51).